The sequence spans 78 residues: Small ribosomal subunit protein bS18 (78 aa).

It belongs to the bacterial ribosomal protein bS18 family. Part of the 30S ribosomal subunit. Forms a tight heterodimer with protein bS6.

Binds as a heterodimer with protein bS6 to the central domain of the 16S rRNA, where it helps stabilize the platform of the 30S subunit. This chain is Small ribosomal subunit protein bS18, found in Limosilactobacillus reuteri (strain DSM 20016) (Lactobacillus reuteri).